The chain runs to 333 residues: tRNA N6-adenosine threonylcarbamoyltransferase (333 aa).

The Fe cation site is built by His-110 and His-114. Residues 133–137 (IVSGG), Asp-166, Gly-179, Asp-183, and Asn-275 each bind substrate. Asp-302 is a Fe cation binding site.

This sequence belongs to the KAE1 / TsaD family. The cofactor is Fe(2+).

It localises to the cytoplasm. The enzyme catalyses L-threonylcarbamoyladenylate + adenosine(37) in tRNA = N(6)-L-threonylcarbamoyladenosine(37) in tRNA + AMP + H(+). Its function is as follows. Required for the formation of a threonylcarbamoyl group on adenosine at position 37 (t(6)A37) in tRNAs that read codons beginning with adenine. Is involved in the transfer of the threonylcarbamoyl moiety of threonylcarbamoyl-AMP (TC-AMP) to the N6 group of A37, together with TsaE and TsaB. TsaD likely plays a direct catalytic role in this reaction. This is tRNA N6-adenosine threonylcarbamoyltransferase from Thermodesulfovibrio yellowstonii (strain ATCC 51303 / DSM 11347 / YP87).